The primary structure comprises 272 residues: Tryptophan synthase alpha chain (272 aa).

Residues Glu49 and Glu60 each act as proton acceptor in the active site.

This sequence belongs to the TrpA family. Tetramer of two alpha and two beta chains.

It carries out the reaction (1S,2R)-1-C-(indol-3-yl)glycerol 3-phosphate + L-serine = D-glyceraldehyde 3-phosphate + L-tryptophan + H2O. Its pathway is amino-acid biosynthesis; L-tryptophan biosynthesis; L-tryptophan from chorismate: step 5/5. Its function is as follows. The alpha subunit is responsible for the aldol cleavage of indoleglycerol phosphate to indole and glyceraldehyde 3-phosphate. In Legionella pneumophila (strain Corby), this protein is Tryptophan synthase alpha chain.